The following is a 938-amino-acid chain: Bifunctional uridylyltransferase/uridylyl-removing enzyme (938 aa).

Residues 1–379 (MPPRLRPTHL…PGRAQKRKPL (379 aa)) are uridylyltransferase. Positions 380 to 733 (DEPGFHEVGG…GRIRSELNAA (354 aa)) are uridylyl-removing. Residues 495–617 (VDEHTLRAVG…VQSPERLRLL (123 aa)) enclose the HD domain. ACT domains follow at residues 734–813 (EVVV…PVAR) and 845–924 (VVEA…TAQA).

Belongs to the GlnD family. Mg(2+) is required as a cofactor.

It catalyses the reaction [protein-PII]-L-tyrosine + UTP = [protein-PII]-uridylyl-L-tyrosine + diphosphate. The catalysed reaction is [protein-PII]-uridylyl-L-tyrosine + H2O = [protein-PII]-L-tyrosine + UMP + H(+). With respect to regulation, uridylyltransferase (UTase) activity is inhibited by glutamine, while glutamine activates uridylyl-removing (UR) activity. In terms of biological role, modifies, by uridylylation and deuridylylation, the PII regulatory proteins (GlnB and homologs), in response to the nitrogen status of the cell that GlnD senses through the glutamine level. Under low glutamine levels, catalyzes the conversion of the PII proteins and UTP to PII-UMP and PPi, while under higher glutamine levels, GlnD hydrolyzes PII-UMP to PII and UMP (deuridylylation). Thus, controls uridylylation state and activity of the PII proteins, and plays an important role in the regulation of nitrogen assimilation and metabolism. This Phenylobacterium zucineum (strain HLK1) protein is Bifunctional uridylyltransferase/uridylyl-removing enzyme.